The chain runs to 318 residues: tRNA uridine(34) hydroxylase (318 aa).

A Rhodanese domain is found at 123 to 217; that stretch reads EDDDTVIIDA…YGKDPETKGQ (95 aa). The active-site Cysteine persulfide intermediate is the Cys-177.

It belongs to the TrhO family.

It catalyses the reaction uridine(34) in tRNA + AH2 + O2 = 5-hydroxyuridine(34) in tRNA + A + H2O. Its function is as follows. Catalyzes oxygen-dependent 5-hydroxyuridine (ho5U) modification at position 34 in tRNAs. The protein is tRNA uridine(34) hydroxylase of Staphylococcus aureus (strain Mu3 / ATCC 700698).